The sequence spans 499 residues: Probable cytosol aminopeptidase (499 aa).

Lys263 and Asp268 together coordinate Mn(2+). Residue Lys275 is part of the active site. Positions 286, 345, and 347 each coordinate Mn(2+). Arg349 is a catalytic residue.

Belongs to the peptidase M17 family. Requires Mn(2+) as cofactor.

Its subcellular location is the cytoplasm. The enzyme catalyses Release of an N-terminal amino acid, Xaa-|-Yaa-, in which Xaa is preferably Leu, but may be other amino acids including Pro although not Arg or Lys, and Yaa may be Pro. Amino acid amides and methyl esters are also readily hydrolyzed, but rates on arylamides are exceedingly low.. The catalysed reaction is Release of an N-terminal amino acid, preferentially leucine, but not glutamic or aspartic acids.. In terms of biological role, presumably involved in the processing and regular turnover of intracellular proteins. Catalyzes the removal of unsubstituted N-terminal amino acids from various peptides. This chain is Probable cytosol aminopeptidase (pepA), found in Chlamydia trachomatis serovar D (strain ATCC VR-885 / DSM 19411 / UW-3/Cx).